A 1960-amino-acid polypeptide reads, in one-letter code: Intraflagellar transport protein 172 (1960 aa).

2 WD repeats span residues Ser63–Lys103 and Gly328–Cys367. 3 TPR repeats span residues Lys1064–Arg1098, Cys1362–Val1395, and Met1397–Arg1428.

This sequence belongs to the IFT172 family.

It is found in the cell projection. The protein localises to the cilium. Its subcellular location is the flagellum. It localises to the cytoplasm. The protein resides in the cytoskeleton. It is found in the flagellum axoneme. The protein localises to the flagellum basal body. In terms of biological role, component of the intraflagellar transport complex B (IFT-B) involved in flagellar assembly. The polypeptide is Intraflagellar transport protein 172 (Giardia intestinalis (strain ATCC 50803 / WB clone C6) (Giardia lamblia)).